A 120-amino-acid chain; its full sequence is Large ribosomal subunit protein uL18 (120 aa).

This sequence belongs to the universal ribosomal protein uL18 family. As to quaternary structure, part of the 50S ribosomal subunit; part of the 5S rRNA/L5/L18/L25 subcomplex. Contacts the 5S and 23S rRNAs.

In terms of biological role, this is one of the proteins that bind and probably mediate the attachment of the 5S RNA into the large ribosomal subunit, where it forms part of the central protuberance. The chain is Large ribosomal subunit protein uL18 from Bradyrhizobium sp. (strain BTAi1 / ATCC BAA-1182).